The chain runs to 213 residues: UPF0502 protein Daro_2469 (213 aa).

Belongs to the UPF0502 family.

In Dechloromonas aromatica (strain RCB), this protein is UPF0502 protein Daro_2469.